The primary structure comprises 226 residues: 7-cyano-7-deazaguanine synthase (226 aa).

Residue 8–18 (ISGGLDSTTCL) participates in ATP binding. Residues Cys188, Cys198, Cys201, and Cys204 each contribute to the Zn(2+) site.

It belongs to the QueC family. It depends on Zn(2+) as a cofactor.

The catalysed reaction is 7-carboxy-7-deazaguanine + NH4(+) + ATP = 7-cyano-7-deazaguanine + ADP + phosphate + H2O + H(+). It functions in the pathway purine metabolism; 7-cyano-7-deazaguanine biosynthesis. Catalyzes the ATP-dependent conversion of 7-carboxy-7-deazaguanine (CDG) to 7-cyano-7-deazaguanine (preQ(0)). This is 7-cyano-7-deazaguanine synthase from Coxiella burnetii (strain RSA 493 / Nine Mile phase I).